Here is a 750-residue protein sequence, read N- to C-terminus: MEAAARGNKKLQERVPIRRTAWRLADLAILFLLLALLLHRVLHDSGAPWRRAALACEAWFTFMWLLNVNAKWSPVRFDTFPENLAERIDELPAVDMFVTTADPVLEPPLVTVNTVLSLLALDYPAAGEKLACYVSDDGCSPLTCYALREAARFARTWVPFCRRHGVAVRAPFRYFSSTPEFGPADGKFLEDWTFMKSEYEKLVHRIEDADEPSLLRHGGGEFAEFLDVERGNHPTIIKVLWDNNRSRTGDGFPRLIYVSREKSPNLHHHYKAGAMNALTRVSALMTNAPFMLNLDCDMFVNNPRVVLHAMCLLLGFDDEISCAFVQTPQKFYGALKDDPFGNQLEVSLMKVGRGIAGLQGIFYCGTGCFHRRKVIYGMRTGREGTTGYSSNKELHSKFGSSNNFKESARDVIYGNLSTEPIVDISSCVDVAKEVAACNYEIGTCWGQEVGWVYGSLTEDVLTGQRIHAAGWRSTLMEIEPPAFMGCAPNGGPACLTQLKRWASGFLEILISRNNPILTTTFKSLQFRQCLAYLHSYVWPVRAPFELCYALLGPYCLLSNQSFLPKTSEDGFYIALALFIAYNTYMFMEFIECGQSARACWNNHRMQRITSASAWLLAFLTVILKTLGFSETVFEVTRKDKSTSDGDSNTDEPEPGRFTFDESTVFIPVTALAMLSVIAIAVGAWRVVLVTTEGLPGGPGISEFISCGWLVLCFMPLLRGLVGSGRYGIPWSIKMKACLLVAIFLLFCKRN.

A run of 2 helical transmembrane segments spans residues 27 to 47 (LAILFLLLALLLHRVLHDSGA) and 52 to 72 (AALACEAWFTFMWLLNVNAKW). Catalysis depends on residues aspartate 137 and aspartate 459. 6 helical membrane passes run 537–557 (VWPVRAPFELCYALLGPYCLL), 570–590 (GFYIALALFIAYNTYMFMEFI), 608–628 (ITSASAWLLAFLTVILKTLGF), 664–684 (VFIPVTALAMLSVIAIAVGAW), 697–717 (GPGISEFISCGWLVLCFMPLL), and 727–747 (GIPWSIKMKACLLVAIFLLFC).

It belongs to the glycosyltransferase 2 family. Plant cellulose synthase-like H subfamily.

The protein resides in the golgi apparatus membrane. Functionally, thought to be a Golgi-localized beta-glycan synthase that polymerize the backbones of noncellulosic polysaccharides (hemicelluloses) of plant cell wall. This chain is Cellulose synthase-like protein H1 (CSLH1), found in Oryza sativa subsp. japonica (Rice).